A 406-amino-acid chain; its full sequence is Putative gustatory receptor 59f (406 aa).

Topologically, residues 1–36 (MRSSATKGAKLKNSPRERLSSFNPQYAERYKELYRT) are cytoplasmic. A helical membrane pass occupies residues 37–57 (LFWLLLISVLANTAPITILPG). Topologically, residues 58–69 (CPNRFYRLVHLS) are extracellular. A helical transmembrane segment spans residues 70 to 90 (WMILWYGLFVLGSYWEFVLVT). Over 91–99 (TQRVSLDRY) the chain is Cytoplasmic. The chain crosses the membrane as a helical span at residues 100-120 (LNAIESAIYVVHIFSIMLLTW). At 121-154 (QCRNWAPKLMTNIVTSDLNRAYTIDCNRTKRFIR) the chain is on the extracellular side. Residue asparagine 147 is glycosylated (N-linked (GlcNAc...) asparagine). Residues 155 to 175 (LQLFLVGIFACLAIFFNIWTH) form a helical membrane-spanning segment. The Cytoplasmic portion of the chain corresponds to 176 to 189 (KFVVYRSILSINSY). The chain crosses the membrane as a helical span at residues 190 to 210 (VMPNIISSISFAQYYLLLQGI). Residues 211 to 259 (AWRQRRLTEGLERELTHLHSPRISEVQKIRMHHANLIDFTKAVNRTFQY) lie on the Extracellular side of the membrane. The N-linked (GlcNAc...) asparagine glycan is linked to asparagine 254. A helical transmembrane segment spans residues 260-280 (SILLLFVGCFLNFNLVLFLVY). Over 281-364 (QGIENPSMAD…RQHVVCGVIN (84 aa)) the chain is Cytoplasmic. The helical transmembrane segment at 365 to 385 (LDLKFLTTLLVASADFFIFLL) threads the bilayer. At 386–406 (QYDVTYEALSKSVQGNVTRYK) the chain is on the extracellular side. N-linked (GlcNAc...) asparagine glycosylation occurs at asparagine 401.

Belongs to the insect chemoreceptor superfamily. Gustatory receptor (GR) family. Gr10a subfamily. In terms of tissue distribution, expressed in the adult abdomen and wing. In larvae, is expressed in neurons of the terminal external chemosensory organ.

The protein resides in the cell membrane. Functionally, probable gustatory receptor which mediates acceptance or avoidance behavior, depending on its substrates. The protein is Putative gustatory receptor 59f (Gr59f) of Drosophila melanogaster (Fruit fly).